The sequence spans 166 residues: Podoplanin (166 aa).

The first 22 residues, 1–22 (MWTAPVLLWVLGSVWFWDSAQG), serve as a signal peptide directing secretion. The Extracellular portion of the chain corresponds to 23–135 (GAIGALEDDL…KKDGLAVVTL (113 aa)). Threonine 34, threonine 52, threonine 55, and threonine 56 each carry an O-linked (GalNAc...) threonine glycan. The segment covering 54–63 (DTTGELDKST) has biased composition (basic and acidic residues). A disordered region spans residues 54-124 (DTTGELDKST…DNAGGETQTT (71 aa)). Residue serine 62 is glycosylated (O-linked (GalNAc...) serine). Residues threonine 63, threonine 71, and threonine 80 are each glycosylated (O-linked (GalNAc...) threonine). O-linked (GalNAc...) serine glycosylation occurs at serine 81. Threonine 83 carries O-linked (GalNAc...) threonine glycosylation. A glycan (O-linked (GalNAc...) serine) is linked at serine 84. The span at 84–93 (SDHDHKEHES) shows a compositional bias: basic and acidic residues. O-linked (GalNAc...) threonine glycosylation is found at threonine 94, threonine 95, threonine 96, threonine 101, threonine 105, threonine 109, and threonine 110. Over residues 94–103 (TTTVKAVTSH) the composition is skewed to polar residues. Residues 104-114 (STDKKTTHPNR) are compositionally biased toward basic and acidic residues. The chain crosses the membrane as a helical span at residues 136–156 (VGIIIGVLLAIGFIGGIIIVV). The tract at residues 137–141 (GIIIG) is requires for dimerization and lipid rafts association. Topologically, residues 157–166 (MRKISGRFSP) are cytoplasmic. A requires for interaction with MSN and EZR region spans residues 158-159 (RK).

The protein belongs to the podoplanin family. As to quaternary structure, homodimer. Interacts with CLEC1B; the interaction is independent of CLEC1B glycosylation and activates CLEC1B; the interaction is dependent of sialic acid on O-glycans. Interacts with CD9; this interaction is homophilic and attenuates platelet aggregation and pulmonary metastasis induced by PDPN. Interacts with LGALS8; the interaction is glycosylation-dependent; may participate in connection of the lymphatic endothelium to the surrounding extracellular matrix. Interacts with HSPA9. Interacts (via extracellular domain) with CD44; this interaction is required for PDPN-mediated directional migration and regulation of lamellipodia extension/stabilization during cell spreading and migration. Interacts (via cytoplasmic domain) with MSN and EZR; activates RHOA and promotes epithelial-mesenchymal transition. Interacts with CCL21; relocalized PDPN to the basolateral membrane. In terms of processing, extensively O-glycosylated. Contains sialic acid residues. O-glycosylation is necessary for platelet aggregation activity. Disialylated at Thr-52; sialic acid is critical for platelet-aggregating activity and for CLEC1B interaction. Post-translationally, the N-terminus is blocked. As to expression, in adult kidney, expressed on the urinary surface and foot processes of podocytes and in parietal epithelial cells of Bowman's capsule where it is localized to luminal surfaces. In lung, expressed exclusively on luminal surfaces of type I alveolar epithelial cells and pleural mesothelial cells. Not expressed in type II alveolar cells. In bone, expressed in osteocytes and osteoblasts. In spleen, liver, stomach and intestine, expressed in mesoepithelium. Also expressed in thymic epithelial cells, choroid plexus and leptomeninges.

Its subcellular location is the membrane. It localises to the cell projection. The protein localises to the lamellipodium membrane. The protein resides in the filopodium membrane. It is found in the microvillus membrane. Its subcellular location is the ruffle membrane. It localises to the membrane raft. The protein localises to the apical cell membrane. The protein resides in the basolateral cell membrane. It is found in the invadopodium. Mediates effects on cell migration and adhesion through its different partners. During development plays a role in blood and lymphatic vessels separation by binding CLEC1B, triggering CLEC1B activation in platelets and leading to platelet activation and/or aggregation. Interaction with CD9, on the contrary, attenuates platelet aggregation and pulmonary metastasis induced by PDPN. Mediates effects on cell migration and adhesion through its different partners. Through MSN or EZR interaction promotes epithelial-mesenchymal transition (EMT) leading to ERZ phosphorylation and triggering RHOA activation leading to cell migration increase and invasiveness. Interaction with CD44 promotes directional cell migration in epithelial and tumor cells. In lymph nodes (LNs), controls fibroblastic reticular cells (FRCs) adhesion to the extracellular matrix (ECM) and contraction of the actomyosin by maintaining ERM proteins (EZR; MSN and RDX) and MYL9 activation through association with unknown transmembrane proteins. Engagement of CLEC1B by PDPN promotes FRCs relaxation by blocking lateral membrane interactions leading to reduction of ERM proteins (EZR; MSN and RDX) and MYL9 activation. Through binding with LGALS8 may participate in connection of the lymphatic endothelium to the surrounding extracellular matrix. In keratinocytes, induces changes in cell morphology showing an elongated shape, numerous membrane protrusions, major reorganization of the actin cytoskeleton, increased motility and decreased cell adhesion. Controls invadopodia stability and maturation leading to efficient degradation of the extracellular matrix (ECM) in tumor cells through modulation of RHOC activity in order to activate ROCK1/ROCK2 and LIMK1/LIMK2 and inactivation of CFL1. Required for normal lung cell proliferation and alveolus formation at birth. Does not function as a water channel or as a regulator of aquaporin-type water channels. Does not have any effect on folic acid or amino acid transport. The sequence is that of Podoplanin from Rattus norvegicus (Rat).